We begin with the raw amino-acid sequence, 293 residues long: Triplex capsid protein 2 (293 aa).

It belongs to the herpesviridae TRX2 protein family. Interacts with TRX1 and major capisd protein/MCP.

It is found in the virion. It localises to the host nucleus. Its function is as follows. Structural component of the T=16 icosahedral capsid. The capsid is composed of pentamers and hexamers of major capsid protein/MCP, which are linked together by heterotrimers called triplexes. These triplexes are formed by a single molecule of triplex protein 1/TRX1 and two copies of triplex protein 2/TRX2. Additionally, TRX1 is required for efficient transport of TRX2 to the nucleus, which is the site of capsid assembly. The chain is Triplex capsid protein 2 from Homo sapiens (Human).